We begin with the raw amino-acid sequence, 265 residues long: Urease accessory protein UreH (265 aa).

The protein belongs to the UreD family. UreH, UreF and UreG form a complex that acts as a GTP-hydrolysis-dependent molecular chaperone, activating the urease apoprotein by helping to assemble the nickel containing metallocenter of UreC. The UreE protein probably delivers the nickel.

The protein resides in the cytoplasm. Its function is as follows. Required for maturation of urease via the functional incorporation of the urease nickel metallocenter. This is Urease accessory protein UreH from Helicobacter pylori (strain G27).